The primary structure comprises 2147 residues: Non-reducing polyketide synthase albA (2147 aa).

Positions Tyr8 to His244 are N-terminal acylcarrier protein transacylase domain (SAT). The Ketosynthase family 3 (KS3) domain occupies Cys375–Asp806. Active-site for beta-ketoacyl synthase activity residues include Cys547, His682, and His724. The tract at residues Phe912–Asp1232 is malonyl-CoA:ACP transacylase (MAT) domain. Ser1001 (for acyl/malonyl transferase activity) is an active-site residue. The tract at residues His1286–Ala1425 is N-terminal hotdog fold. Positions His1286–Asp1598 constitute a PKS/mFAS DH domain. Residues Thr1290 to Pro1603 form a product template (PT) domain region. Catalysis depends on His1326, which acts as the Proton acceptor; for dehydratase activity. Residues Asp1452 to Asp1598 form a C-terminal hotdog fold region. The Proton donor; for dehydratase activity role is filled by Asp1511. A disordered region spans residues Lys1608–Lys1637. Low complexity predominate over residues Pro1610 to Lys1637. One can recognise a Carrier 1 domain in the interval Pro1642–Ser1719. At Ser1679 the chain carries O-(pantetheine 4'-phosphoryl)serine. The segment at Ser1719–Lys1759 is disordered. Low complexity predominate over residues Ser1724–Ser1747. The region spanning Ile1760–Pro1837 is the Carrier 2 domain. At Ser1797 the chain carries O-(pantetheine 4'-phosphoryl)serine. Residues Ser1873–Met2145 are claisen cyclase domain. Residue Ser1963 is the For Claisen cyclase activity of the active site.

It catalyses the reaction 6 malonyl-CoA + acetyl-CoA + 6 H(+) = naphtopyrone YWA1 + 6 CO2 + 7 CoA + H2O. The protein operates within secondary metabolite biosynthesis. Its function is as follows. Non-reducing polyketide synthase involved in the biosynthesis of bifonsecin B, a dimeric gamma-naphthopyrone. The first step in the biosynthesis of bifonsecin B is the production of gamma-naphthopyrone precursor YWA1 by the non-reducing polyketide synthase albA, via condensation of one acetyl-CoA starter unit with 6 malonyl-CoA units. YWA1 is then methylated by bfoE at position C-6 to yield foncesin which is further methylated at position C-8 by bfoD to produce fonsecin B. A key enzyme in the biosynthetic pathway is the cytochrome P450 monooxygenase bfoB which catalyzes the oxidative dimerization of fonsecin B to bifonsecin B. Bfob also catalyzes the oxidative dimerization of rubrofusarin B into nigerone. The stereoselectivity of bfoB is influenced by the two natural monomeric substrates; homodimerization of fonsecin B yields a stereochemically pure biaryl, M-foncerine B, while rubrofusarin B yields a mixture of enantiomers M- and P-nigerone. This chain is Non-reducing polyketide synthase albA, found in Aspergillus brasiliensis (strain CBS 101740 / IMI 381727 / IBT 21946).